A 262-amino-acid chain; its full sequence is DNA repair protein RecO (262 aa).

Belongs to the RecO family.

In terms of biological role, involved in DNA repair and RecF pathway recombination. This is DNA repair protein RecO from Enterococcus faecalis (strain ATCC 700802 / V583).